A 230-amino-acid chain; its full sequence is NADH dehydrogenase [ubiquinone] iron-sulfur protein 8, mitochondrial (230 aa).

Residues 1 to 42 constitute a mitochondrion transit peptide; it reads MAAILARKSLSALRSRQLVLAGQAWQQGANTSNGTLLGTRTF. 4Fe-4S ferredoxin-type domains are found at residues 122–151 and 161–190; these read RRYP…IEAE and TRYD…EGPN. [4Fe-4S] cluster contacts are provided by C131, C134, C137, C141, C170, C173, C176, and C180.

Belongs to the complex I 23 kDa subunit family. Complex I is composed of about 45 different subunits. This is a component of the iron-sulfur (IP) fragment of the enzyme. [4Fe-4S] cluster serves as cofactor.

It localises to the mitochondrion. The enzyme catalyses a ubiquinone + NADH + 5 H(+)(in) = a ubiquinol + NAD(+) + 4 H(+)(out). Core subunit of the mitochondrial membrane respiratory chain NADH dehydrogenase (Complex I) that is believed to belong to the minimal assembly required for catalysis. Complex I functions in the transfer of electrons from NADH to the respiratory chain. The immediate electron acceptor for the enzyme is believed to be ubiquinone. May donate electrons to ubiquinone. The protein is NADH dehydrogenase [ubiquinone] iron-sulfur protein 8, mitochondrial of Nicotiana tabacum (Common tobacco).